Consider the following 960-residue polypeptide: Probable glutamyl endopeptidase, chloroplastic (960 aa).

Residues Met-1–Met-62 constitute a chloroplast transit peptide. The interval Ser-78–Ala-98 is disordered. Residues Asn-89–Ala-98 are compositionally biased toward polar residues. Residues Ser-780, Asp-854, and His-888 each act as charge relay system in the active site. The interval Thr-915 to Leu-960 is disordered. Positions Gln-924–Asp-933 are enriched in basic and acidic residues.

The protein belongs to the peptidase S9D family.

The protein resides in the plastid. The protein localises to the chloroplast stroma. Its function is as follows. Serine-type protease active in vitro against the LHCII N-terminal. Cleaves its substrate on the carboxy-side of Glu residues. The polypeptide is Probable glutamyl endopeptidase, chloroplastic (GEP) (Arabidopsis thaliana (Mouse-ear cress)).